We begin with the raw amino-acid sequence, 70 residues long: ATP synthase subunit c (70 aa).

2 consecutive transmembrane segments (helical) span residues 4 to 24 (IAAA…NGLI) and 45 to 65 (IMFI…VIAF).

The protein belongs to the ATPase C chain family. As to quaternary structure, F-type ATPases have 2 components, F(1) - the catalytic core - and F(0) - the membrane proton channel. F(1) has five subunits: alpha(3), beta(3), gamma(1), delta(1), epsilon(1). F(0) has three main subunits: a(1), b(2) and c(10-14). The alpha and beta chains form an alternating ring which encloses part of the gamma chain. F(1) is attached to F(0) by a central stalk formed by the gamma and epsilon chains, while a peripheral stalk is formed by the delta and b chains.

It is found in the cell membrane. F(1)F(0) ATP synthase produces ATP from ADP in the presence of a proton or sodium gradient. F-type ATPases consist of two structural domains, F(1) containing the extramembraneous catalytic core and F(0) containing the membrane proton channel, linked together by a central stalk and a peripheral stalk. During catalysis, ATP synthesis in the catalytic domain of F(1) is coupled via a rotary mechanism of the central stalk subunits to proton translocation. In terms of biological role, key component of the F(0) channel; it plays a direct role in translocation across the membrane. A homomeric c-ring of between 10-14 subunits forms the central stalk rotor element with the F(1) delta and epsilon subunits. This is ATP synthase subunit c from Staphylococcus haemolyticus (strain JCSC1435).